The primary structure comprises 294 residues: Phosphatidylserine decarboxylase proenzyme (294 aa).

Active-site charge relay system; for autoendoproteolytic cleavage activity residues include D88, H145, and S248. S248 functions as the Schiff-base intermediate with substrate; via pyruvic acid; for decarboxylase activity in the catalytic mechanism. S248 carries the pyruvic acid (Ser); by autocatalysis modification.

The protein belongs to the phosphatidylserine decarboxylase family. PSD-B subfamily. Prokaryotic type I sub-subfamily. Heterodimer of a large membrane-associated beta subunit and a small pyruvoyl-containing alpha subunit. The cofactor is pyruvate. In terms of processing, is synthesized initially as an inactive proenzyme. Formation of the active enzyme involves a self-maturation process in which the active site pyruvoyl group is generated from an internal serine residue via an autocatalytic post-translational modification. Two non-identical subunits are generated from the proenzyme in this reaction, and the pyruvate is formed at the N-terminus of the alpha chain, which is derived from the carboxyl end of the proenzyme. The autoendoproteolytic cleavage occurs by a canonical serine protease mechanism, in which the side chain hydroxyl group of the serine supplies its oxygen atom to form the C-terminus of the beta chain, while the remainder of the serine residue undergoes an oxidative deamination to produce ammonia and the pyruvoyl prosthetic group on the alpha chain. During this reaction, the Ser that is part of the protease active site of the proenzyme becomes the pyruvoyl prosthetic group, which constitutes an essential element of the active site of the mature decarboxylase.

It is found in the cell membrane. It carries out the reaction a 1,2-diacyl-sn-glycero-3-phospho-L-serine + H(+) = a 1,2-diacyl-sn-glycero-3-phosphoethanolamine + CO2. The protein operates within phospholipid metabolism; phosphatidylethanolamine biosynthesis; phosphatidylethanolamine from CDP-diacylglycerol: step 2/2. Its function is as follows. Catalyzes the formation of phosphatidylethanolamine (PtdEtn) from phosphatidylserine (PtdSer). The sequence is that of Phosphatidylserine decarboxylase proenzyme from Herminiimonas arsenicoxydans.